We begin with the raw amino-acid sequence, 66 residues long: UPF0337 protein M6_Spy1542 (66 aa).

Positions 1–10 are enriched in basic and acidic residues; sequence MSEEKLKAKV. Residues 1-22 form a disordered region; it reads MSEEKLKAKVEQASGSLKEGAG.

This sequence belongs to the UPF0337 (CsbD) family.

This is UPF0337 protein M6_Spy1542 from Streptococcus pyogenes serotype M6 (strain ATCC BAA-946 / MGAS10394).